Reading from the N-terminus, the 148-residue chain is uncharacterized protein (148 aa).

The segment covering 1–17 has biased composition (polar residues); it reads MEGLQRSTISFRRQGSS. The interval 1–148 is disordered; sequence MEGLQRSTIS…SRRRIVTKKR (148 aa). Basic and acidic residues-rich tracts occupy residues 36–47 and 58–67; these read EQKDESQRDEQP and KPIDEKDKLR. Phosphoserine is present on residues Ser-100 and Ser-107. Positions 128–148 are enriched in basic residues; it reads VNPRKRPPKRRSRRRIVTKKR.

This is an uncharacterized protein from Arabidopsis thaliana (Mouse-ear cress).